Consider the following 141-residue polypeptide: MVSKRRVLREMVVKLFFQREFRHNEFEEIFSETLNKIRDNTIKADFKRYVEGVFHNLSTIDNIISNHLINWSFDRLSYLERNVLRVGTYELIYEENIPIEVTINEMIEIAKKYGSEESGKFVNGILDRIAKEHAPKEKFNL.

This sequence belongs to the NusB family.

Involved in transcription antitermination. Required for transcription of ribosomal RNA (rRNA) genes. Binds specifically to the boxA antiterminator sequence of the ribosomal RNA (rrn) operons. This is Transcription antitermination protein NusB from Fervidobacterium nodosum (strain ATCC 35602 / DSM 5306 / Rt17-B1).